The chain runs to 802 residues: Putative transcriptional regulator cudA (802 aa).

Disordered stretches follow at residues methionine 1–isoleucine 148, isoleucine 154–leucine 173, asparagine 381–asparagine 446, and glutamine 636–glutamine 658. Low complexity predominate over residues asparagine 25–glutamine 63. Polar residues predominate over residues aspartate 69 to isoleucine 88. Low complexity predominate over residues asparagine 89–threonine 128. Residues proline 129 to threonine 142 are compositionally biased toward polar residues. A compositionally biased stretch (low complexity) spans asparagine 381–glutamate 445.

Expressed in the prestalk cells that constitute the slug tip (pstA cells) and in prespore cells (at protein level). Not expressed in the band of prestalk cells that lies behind the slug tip (pstO cells). Highly expressed in pstO derived papilla cells during culmination.

Its subcellular location is the nucleus. The protein resides in the nucleoplasm. Essential for normal culmination. May function as a transcriptional regulator. The sequence is that of Putative transcriptional regulator cudA (cudA) from Dictyostelium discoideum (Social amoeba).